A 365-amino-acid chain; its full sequence is Fructose-1,6-bisphosphate aldolase/phosphatase (365 aa).

Aspartate 11 functions as the Proton acceptor; for FBP phosphatase activity in the catalytic mechanism. Aspartate 11, histidine 18, aspartate 52, and aspartate 53 together coordinate Mg(2+). Histidine 18 serves as a coordination point for beta-D-fructose 1,6-bisphosphate. Position 18 (histidine 18) interacts with dihydroxyacetone phosphate. Tyrosine 90 is a beta-D-fructose 1,6-bisphosphate binding site. Glutamine 94 contacts Mg(2+). 103-104 (GN) lines the beta-D-fructose 1,6-bisphosphate pocket. Aspartate 131 contributes to the Mg(2+) binding site. A beta-D-fructose 1,6-bisphosphate-binding site is contributed by lysine 132. Lysine 132 provides a ligand contact to dihydroxyacetone phosphate. Tyrosine 228 acts as the Proton donor/acceptor; for FBP aldolase activity in catalysis. Residues lysine 231, aspartate 232, and aspartate 233 each contribute to the Mg(2+) site. Lysine 231 (schiff-base intermediate with DHAP; for FBP aldolase activity) is an active-site residue. Residues 241 to 242 (QS), arginine 265, aspartate 286, and tyrosine 347 contribute to the beta-D-fructose 1,6-bisphosphate site. Residues arginine 265 and aspartate 286 each coordinate dihydroxyacetone phosphate.

The protein belongs to the FBP aldolase/phosphatase family. In terms of assembly, homooctamer; dimer of tetramers. It depends on Mg(2+) as a cofactor.

It catalyses the reaction beta-D-fructose 1,6-bisphosphate + H2O = beta-D-fructose 6-phosphate + phosphate. It carries out the reaction beta-D-fructose 1,6-bisphosphate = D-glyceraldehyde 3-phosphate + dihydroxyacetone phosphate. Its pathway is carbohydrate biosynthesis; gluconeogenesis. In terms of biological role, catalyzes two subsequent steps in gluconeogenesis: the aldol condensation of dihydroxyacetone phosphate (DHAP) and glyceraldehyde-3-phosphate (GA3P) to fructose-1,6-bisphosphate (FBP), and the dephosphorylation of FBP to fructose-6-phosphate (F6P). The chain is Fructose-1,6-bisphosphate aldolase/phosphatase from Methanothermobacter marburgensis (strain ATCC BAA-927 / DSM 2133 / JCM 14651 / NBRC 100331 / OCM 82 / Marburg) (Methanobacterium thermoautotrophicum).